A 545-amino-acid chain; its full sequence is Thermosome subunit alpha (545 aa).

The disordered stretch occupies residues 522–545 (KKSTPPSGQGGQGQGMPGGGMPEY). Residues 529-545 (GQGGQGQGMPGGGMPEY) are compositionally biased toward gly residues.

Belongs to the TCP-1 chaperonin family. Forms a Heterooligomeric complex of two stacked eight-membered rings. In terms of processing, the N-terminus is blocked.

In terms of biological role, molecular chaperone; binds unfolded polypeptides in vitro, and has a weak ATPase activity. The sequence is that of Thermosome subunit alpha (thsA) from Thermoplasma acidophilum (strain ATCC 25905 / DSM 1728 / JCM 9062 / NBRC 15155 / AMRC-C165).